The primary structure comprises 410 residues: Mating-type locus allele B7 protein (410 aa).

The segment at 1–110 is variable domain between B alleles; the sequence is MSSDPNFSLT…VNVGSPAVGC (110 aa). The segment at residues 107-184 is a DNA-binding region (homeobox; TALE-type); that stretch reads AVGCRNLSED…NARRRSGWSH (78 aa). The interval 111–410 is highly conserved between B alleles; it reads RNLSEDLPAY…PFLCLSVAFV (300 aa). 3 disordered regions span residues 202-225, 278-336, and 374-394; these read RAKL…SNNL, TPKP…PELS, and ARGN…QPDE. The Nuclear localization signal motif lies at 276–308; that stretch reads KKTPKPGMPRPVTTVAKRQPARKTKPAAKPNSR. Residues 306-336 are compositionally biased toward polar residues; it reads NSRTANPRASTTPSIDSTLDSSKLESTPELS. A not essential for B7 function region spans residues 333–410; that stretch reads PELSMCSTAD…PFLCLSVAFV (78 aa). Basic residues predominate over residues 375–388; the sequence is RGNRKVKALPKRAG.

It belongs to the TALE/M-ATYP homeobox family.

It is found in the nucleus. In terms of biological role, the B locus has at least 25 alleles, and any combination of two different B alleles yields a multimeric regulatory protein, that activates genes responsible for the pathogenicity and for the sexual development of the fungus within the corn plant. This Mycosarcoma maydis (Corn smut fungus) protein is Mating-type locus allele B7 protein.